The chain runs to 251 residues: Lactose phosphotransferase system repressor (251 aa).

The 56-residue stretch at 3 to 58 (KYDRLDEITKLVNKRGSVRTNEIVEDLNVSDMTVRRDLAELEEKGVLTKIHGGARS) folds into the HTH deoR-type domain. Residues 20-39 (VRTNEIVEDLNVSDMTVRRD) constitute a DNA-binding region (H-T-H motif).

Repressor of the lactose catabolism operon. Galactose-6-phosphate is the inducer. This is Lactose phosphotransferase system repressor (lacR) from Staphylococcus epidermidis (strain ATCC 35984 / DSM 28319 / BCRC 17069 / CCUG 31568 / BM 3577 / RP62A).